Reading from the N-terminus, the 338-residue chain is mRNA decay activator protein ZFP36L1 (338 aa).

The segment at 1–111 is necessary and sufficient for the association with mRNA decay enzymes and mRNA decay activation; the sequence is MTTTLVSATI…QKQPGSGQVN (111 aa). Ser-54 carries the phosphoserine; by MAPKAPK2 modification. Ser-90 bears the Phosphoserine; by PKB/AKT1 mark. Position 92 is a phosphoserine; by PKB/AKT1 and MAPKAPK2 (Ser-92). Residues 93 to 113 are disordered; the sequence is EGGERLLPTQKQPGSGQVNSS. Residues 101 to 113 show a composition bias toward polar residues; the sequence is TQKQPGSGQVNSS. C3H1-type zinc fingers lie at residues 114-142 and 152-180; these read RYKTELCRPFEENGACKYGDKCQFAHGIH and KYKTELCRTFHTIGFCPYGPRCHFIHNAE. The interval 185–338 is necessary for mRNA decay activation; the sequence is LAGGRDLSAD…IFSRLSISDD (154 aa). Ser-203 carries the post-translational modification Phosphoserine; by PKB/AKT1 and MAPKAPK2. The interval 273–338 is disordered; it reads SPTTFLFRPM…IFSRLSISDD (66 aa). A compositionally biased stretch (low complexity) spans 305 to 318; it reads YLSSSSSSHSGSDS. Ser-318 is modified (phosphoserine). The residue at position 334 (Ser-334) is a Phosphoserine; by RPS6KA1.

In terms of assembly, associates with the cytoplasmic CCR4-NOT deadenylase and RNA exosome complexes to trigger ARE-containing mRNA deadenylation and decay processes. Interacts with CNOT1. Interacts (via N-terminus) with CNOT6. Interacts with CNOT7; this interaction is inhibited in response to phorbol 12-myristate 13-acetate (PMA) treatment in a p38 MAPK-dependent manner. Interacts with DCP1A. Interacts (via N-terminus) with DCP2. Interacts (via N-terminus) with EXOSC2. Interacts with XRN1. Interacts (via phosphorylated form) with YWHAB; this interaction occurs in a protein kinase AKT1-dependent manner. Interacts (via phosphorylated form) with YWHAZ; this interaction occurs in a p38 MAPK- and AKT-signaling pathways. In terms of processing, phosphorylated. Phosphorylated by RPS6KA1 at Ser-334 upon phorbol 12-myristate 13-acetate (PMA) treatment; this phosphorylation results in dissociation of the CCR4-NOT deadenylase complex and induces p38 MAPK-mediated stabilization of the low-density lipoprotein receptor LDLR mRNA. Phosphorylated by protein kinase AKT1 at Ser-92 and Ser-203 in response to insulin; these phosphorylations stabilize ZFP36L1, increase the association with 14-3-3 proteins and mediate ARE-containing mRNA stabilization. AKT1-mediated phosphorylation at Ser-92 does not impair ARE-containing RNA-binding. Phosphorylated at Ser-54, Ser-92 and Ser-203 by MAPKAPK2; these phosphorylations increase the association with 14-3-3 proteins and mediate ARE-containing mRNA stabilization in a protein kinase AKT1-independent manner. MAPKAPK2-mediated phosphorylations at Ser-54, Ser-92 and Ser-203 do not impair ARE-containing RNA-binding. Phosphorylations increase the association with 14-3-3 proteins and mediate ARE-containing mRNA stabilization during early adipogenesis in a p38 MAPK- and AKT-dependent manner. Phosphorylated by protein kinase AKT1 at Ser-92. Post-translationally, ubiquitinated. Ubiquitination leads to proteasomal degradation, a process inhibited by phosphorylations at Ser-90, Ser-92 and Ser-203.

The protein resides in the nucleus. The protein localises to the cytoplasm. It localises to the cytoplasmic granule. Its subcellular location is the P-body. In terms of biological role, zinc-finger RNA-binding protein that destabilizes several cytoplasmic AU-rich element (ARE)-containing mRNA transcripts by promoting their poly(A) tail removal or deadenylation, and hence provide a mechanism for attenuating protein synthesis. Acts as a 3'-untranslated region (UTR) ARE mRNA-binding adapter protein to communicate signaling events to the mRNA decay machinery. Functions by recruiting the CCR4-NOT deadenylase complex and components of the cytoplasmic RNA decay machinery to the bound ARE-containing mRNAs, and hence promotes ARE-mediated mRNA deadenylation and decay processes. Also induces the degradation of ARE-containing mRNAs even in absence of poly(A) tail. Binds to 3'-UTR ARE of numerous mRNAs. Positively regulates early adipogenesis by promoting ARE-mediated mRNA decay of immediate early genes (IEGs). Promotes ARE-mediated mRNA decay of mineralocorticoid receptor NR3C2 mRNA in response to hypertonic stress. Negatively regulates hematopoietic/erythroid cell differentiation by promoting ARE-mediated mRNA decay of the transcription factor STAT5B mRNA. Positively regulates monocyte/macrophage cell differentiation by promoting ARE-mediated mRNA decay of the cyclin-dependent kinase CDK6 mRNA. Promotes degradation of ARE-containing pluripotency-associated mRNAs in embryonic stem cells (ESCs), such as NANOG, through a fibroblast growth factor (FGF)-induced MAPK-dependent signaling pathway, and hence attenuates ESC self-renewal and positively regulates mesendoderm differentiation. May play a role in mediating pro-apoptotic effects in malignant B-cells by promoting ARE-mediated mRNA decay of BCL2 mRNA. In association with ZFP36L2 maintains quiescence on developing B lymphocytes by promoting ARE-mediated decay of several mRNAs encoding cell cycle regulators that help B cells progress through the cell cycle, and hence ensuring accurate variable-diversity-joining (VDJ) recombination and functional immune cell formation. Together with ZFP36L2 is also necessary for thymocyte development and prevention of T-cell acute lymphoblastic leukemia (T-ALL) transformation by promoting ARE-mediated mRNA decay of the oncogenic transcription factor NOTCH1 mRNA. Participates in the delivery of target ARE-mRNAs to processing bodies (PBs). In addition to its cytosolic mRNA-decay function, plays a role in the regulation of nuclear mRNA 3'-end processing; modulates mRNA 3'-end maturation efficiency of the DLL4 mRNA through binding with an ARE embedded in a weak noncanonical polyadenylation (poly(A)) signal in endothelial cells. Also involved in the regulation of stress granule (SG) and P-body (PB) formation and fusion. Plays a role in vasculogenesis and endocardial development. Plays a role in the regulation of keratinocyte proliferation, differentiation and apoptosis. Plays a role in myoblast cell differentiation. In Rattus norvegicus (Rat), this protein is mRNA decay activator protein ZFP36L1.